A 105-amino-acid chain; its full sequence is Large ribosomal subunit protein uL24 (105 aa).

It belongs to the universal ribosomal protein uL24 family. In terms of assembly, part of the 50S ribosomal subunit.

Its function is as follows. One of two assembly initiator proteins, it binds directly to the 5'-end of the 23S rRNA, where it nucleates assembly of the 50S subunit. One of the proteins that surrounds the polypeptide exit tunnel on the outside of the subunit. This chain is Large ribosomal subunit protein uL24, found in Nitrosomonas europaea (strain ATCC 19718 / CIP 103999 / KCTC 2705 / NBRC 14298).